A 487-amino-acid polypeptide reads, in one-letter code: Serine carboxypeptidase-like 38 (487 aa).

The first 20 residues, 1 to 20 (MGKQQDWSVTACIFLSLSLA), serve as a signal peptide directing secretion. 3 disulfides stabilise this stretch: C119–C368, C280–C290, and C315–C336. Residue S215 is part of the active site. A glycan (N-linked (GlcNAc...) asparagine) is linked at N233. N317 and N357 each carry an N-linked (GlcNAc...) asparagine glycan. D407 is an active-site residue. N423 and N449 each carry an N-linked (GlcNAc...) asparagine glycan. H460 is an active-site residue.

Belongs to the peptidase S10 family. Expressed in seedlings, roots, leaves, flowers and siliques.

The protein localises to the secreted. Functionally, probable carboxypeptidase. This is Serine carboxypeptidase-like 38 (SCPL38) from Arabidopsis thaliana (Mouse-ear cress).